The sequence spans 855 residues: Putative AAA family ATPase R476 (855 aa).

The span at 1–13 (MNKRDFSELKNSE) shows a compositional bias: basic and acidic residues. The segment at 1-37 (MNKRDFSELKNSESSEESSLVSSTETVRSSKRNKKFH) is disordered. Residues 17 to 27 (ESSLVSSTETV) show a composition bias toward low complexity. ATP is bound at residue 610–617 (GPPGTGKT).

It belongs to the AAA ATPase family.

In Acanthamoeba polyphaga mimivirus (APMV), this protein is Putative AAA family ATPase R476.